The chain runs to 326 residues: MALTASVKDELSRLDIKKSSVRKAEVSAMLRFAGGLHIISGRIVIEAEVDLASTARRLRAAIAEVYGHQSEIIVVSGGGLRRGSRYVVRVVRDGEALARQTGLLDGRGRPVRGLPSAVVNGSAADAEAVWRGAFLAHGSLTEPGRSSSLEVTCPGPESALALVGAARRLGIQAKAREVRGVDRVVIRDGDTIATLLTRMGAHDALMVWEERRMRKEVRATANRLANFDDANLRRSAQAAVAAGARVDRALEILGDDVPDHLKYAGELRVAHKQASLDELGRLADPPMTKDAIAGRIRRLLAMADKRALDLGIPGTEANVTPEMMDE.

A DNA-binding region (H-T-H motif) is located at residues 275–308; that stretch reads SLDELGRLADPPMTKDAIAGRIRRLLAMADKRAL.

Belongs to the WhiA family.

Its function is as follows. Involved in cell division and chromosome segregation. This chain is Probable cell division protein WhiA, found in Paenarthrobacter aurescens (strain TC1).